The sequence spans 829 residues: Transcription activator GutR (829 aa).

Residues 42 to 61 (IDKIALQLGVSPNTIKSWIG) constitute a DNA-binding region (H-T-H motif). Residue 200 to 207 (GWAGMGKT) coordinates ATP. 3 TPR repeats span residues 697–730 (HRVL…SSTY), 736–769 (IEAY…KHNA), and 775–808 (IYYH…IDSW).

Activator of the glucitol dehydrogenase gene (gutB). The polypeptide is Transcription activator GutR (gutR) (Bacillus subtilis (strain 168)).